The sequence spans 366 residues: 3-dehydroquinate synthase (366 aa).

NAD(+) contacts are provided by residues 69-74 (DGEAYK), 103-107 (GVIGD), 127-128 (TT), K140, and K149. The Zn(2+) site is built by E182, H245, and H262.

The protein belongs to the sugar phosphate cyclases superfamily. Dehydroquinate synthase family. It depends on Co(2+) as a cofactor. Zn(2+) serves as cofactor. NAD(+) is required as a cofactor.

It is found in the cytoplasm. It carries out the reaction 7-phospho-2-dehydro-3-deoxy-D-arabino-heptonate = 3-dehydroquinate + phosphate. It functions in the pathway metabolic intermediate biosynthesis; chorismate biosynthesis; chorismate from D-erythrose 4-phosphate and phosphoenolpyruvate: step 2/7. Its function is as follows. Catalyzes the conversion of 3-deoxy-D-arabino-heptulosonate 7-phosphate (DAHP) to dehydroquinate (DHQ). The sequence is that of 3-dehydroquinate synthase from Pseudomonas fluorescens (strain ATCC BAA-477 / NRRL B-23932 / Pf-5).